The sequence spans 93 residues: Large ribosomal subunit protein bL27 (93 aa).

Positions 1–8 are excised as a propeptide; that stretch reads MIMDLQFF. The disordered stretch occupies residues 8-29; it reads FSHHKGGGSTANGRNSAGRRLG.

The protein belongs to the bacterial ribosomal protein bL27 family. The N-terminus is cleaved by ribosomal processing cysteine protease Prp.

The protein is Large ribosomal subunit protein bL27 of Limosilactobacillus reuteri (strain DSM 20016) (Lactobacillus reuteri).